Here is a 65-residue protein sequence, read N- to C-terminus: Hirudin-2 (65 aa).

The tract at residues 1–3 is interaction with thrombin active site; sequence ITY. Cystine bridges form between Cys-6/Cys-14, Cys-16/Cys-28, and Cys-22/Cys-39. The tract at residues 39 to 65 is disordered; the sequence is CVTGEGTPKPQSHNDGDFEEIPEEYLQ. Thr-45 carries an O-linked (GalNAc...) threonine glycan. The segment at 55–65 is interaction with fibrinogen-binding exosite of thrombin; it reads DFEEIPEEYLQ. The segment covering 55–65 has biased composition (acidic residues); it reads DFEEIPEEYLQ. Sulfotyrosine is present on Tyr-63.

The protein belongs to the protease inhibitor I14 (hirudin) family.

The protein resides in the secreted. Hirudin is a potent thrombin-specific protease inhibitor. It forms a stable non-covalent complex with alpha-thrombin, thereby abolishing its ability to cleave fibrinogen. The polypeptide is Hirudin-2 (Hirudo medicinalis (Medicinal leech)).